We begin with the raw amino-acid sequence, 192 residues long: Small ribosomal subunit protein uS4B (192 aa).

Ser89 and Ser179 each carry phosphoserine. Positions 107–181 (RRLQTQVFKL…CKRKRLRSQQ (75 aa)) constitute an S4 RNA-binding domain. Residues 166 to 192 (GGRPGRCKRKRLRSQQEGGEGEEAEEE) are disordered.

This sequence belongs to the universal ribosomal protein uS4 family. Component of the small ribosomal subunit (SSU). Mature yeast ribosomes consist of a small (40S) and a large (60S) subunit. The 40S small subunit contains 1 molecule of ribosomal RNA (18S rRNA) and at least 33 different proteins. The large 60S subunit contains 3 rRNA molecules (25S, 5.8S and 5S rRNA) and at least 46 different proteins. Interacts with snoRNA U3. uS11 interacts with MPP10. Component of the ribosomal small subunit (SSU) processome composed of at least 40 protein subunits and snoRNA U3.

The protein resides in the cytoplasm. In terms of biological role, component of the ribosome, a large ribonucleoprotein complex responsible for the synthesis of proteins in the cell. The small ribosomal subunit (SSU) binds messenger RNAs (mRNAs) and translates the encoded message by selecting cognate aminoacyl-transfer RNA (tRNA) molecules. The large subunit (LSU) contains the ribosomal catalytic site termed the peptidyl transferase center (PTC), which catalyzes the formation of peptide bonds, thereby polymerizing the amino acids delivered by tRNAs into a polypeptide chain. The nascent polypeptides leave the ribosome through a tunnel in the LSU and interact with protein factors that function in enzymatic processing, targeting, and the membrane insertion of nascent chains at the exit of the ribosomal tunnel. uS4 is involved in nucleolar processing of pre-18S ribosomal RNA and ribosome assembly. The sequence is that of Small ribosomal subunit protein uS4B (rps902) from Schizosaccharomyces pombe (strain 972 / ATCC 24843) (Fission yeast).